The primary structure comprises 337 residues: 2-oxoglutarate receptor 1 (337 aa).

The Extracellular segment spans residues 1 to 38 (MIEPLDSPASDSDFLDYPSALGNCTDEQISFKMQYLPV). Residue Asn-23 is glycosylated (N-linked (GlcNAc...) asparagine). A helical transmembrane segment spans residues 39 to 59 (IYSIIFLVGFPGNTVAISIYI). The Cytoplasmic portion of the chain corresponds to 60 to 69 (FKMRPWRGST). The chain crosses the membrane as a helical span at residues 70–90 (VIMLNLALTDLLYLTSLPFLI). Residues 91-116 (HYYASGENWIFGDFMCKFIRFGFHFN) are Extracellular-facing. A disulfide bridge links Cys-106 with Cys-183. Residues 117–137 (LYSSILFLTCFSLFRYVVIIH) traverse the membrane as a helical segment. The Cytoplasmic portion of the chain corresponds to 138 to 151 (PMSCFSIQKTRWAV). Residues 152 to 172 (VACAGVWVISLVAVMPMTFLI) traverse the membrane as a helical segment. Topologically, residues 173 to 200 (TSTTRTNRSACLDLTSSDDLTTIKWYNL) are extracellular. Residues 201 to 221 (ILTATTFCLPLVIVTLCYTTI) form a helical membrane-spanning segment. Residues 222-242 (ISTLTHGPRTHSCFKQKARRL) lie on the Cytoplasmic side of the membrane. A helical transmembrane segment spans residues 243 to 263 (TILLLLVFYICFLPFHILRVI). Residues 264-284 (RIESRLLSISCSIESHIHEAY) are Extracellular-facing. Residues 285–305 (IVSRPLAALNTFGNLLLYVVV) form a helical membrane-spanning segment. The Cytoplasmic segment spans residues 306-337 (SNNFQQAFCSIVRCKASGDLEQGKKDSCSNNP).

The protein belongs to the G-protein coupled receptor 1 family. Predominantly expressed in the kidney with limited expression in the testis and the smooth muscle. Expressed in SLC26A4/pendrin-positive type B and non-A non-B intercalated cells (at protein level).

Its subcellular location is the cell membrane. Functionally, g protein-coupled receptor for dicarboxylates and amino dicarboxylates. Receptor for itaconate produced by activated macrophages upon bacterial infection. In the respiratory epithelium, couples the binding of itaconate to the activation of GNA11 and downstream intracellular Ca(2+) release, leading to mucocilliary clearance of airborne pathogens. Receptor for leukotriene E4 (LTE4) produced by mast cells upon allergic inflammation. Binds with high affinity to LTE4 and elicits mucin release from pulmonary epithelium in response to airborne fungi allergens. Regulates mucin-producing goblet cell homeostasis. Receptor for alpha-ketoglutarate produced by proximal tubule renal cells upon metabolic alkalosis. In an intrarenal paracrine signaling pathway, binds alpha-ketoglutarate and drives transepithelial salt reabsorption and bicarbonate secretion by SLC26A4/pendrin-positive intercalated cells. In Mus musculus (Mouse), this protein is 2-oxoglutarate receptor 1 (Oxgr1).